The chain runs to 464 residues: tRNA modification GTPase MnmE (464 aa).

Arg23, Glu84, and Arg123 together coordinate (6S)-5-formyl-5,6,7,8-tetrahydrofolate. In terms of domain architecture, TrmE-type G spans 216–386 (GARATLVGRP…LGATVARLLL (171 aa)). Position 226 (Asn226) interacts with K(+). GTP is bound by residues 226–231 (NAGKSS), 245–251 (TPIPGTT), and 270–273 (DTAG). Ser230 contacts Mg(2+). Residues Thr245, Ile247, and Thr250 each coordinate K(+). Thr251 contacts Mg(2+). Position 464 (Lys464) interacts with (6S)-5-formyl-5,6,7,8-tetrahydrofolate.

It belongs to the TRAFAC class TrmE-Era-EngA-EngB-Septin-like GTPase superfamily. TrmE GTPase family. In terms of assembly, homodimer. Heterotetramer of two MnmE and two MnmG subunits. The cofactor is K(+).

It localises to the cytoplasm. In terms of biological role, exhibits a very high intrinsic GTPase hydrolysis rate. Involved in the addition of a carboxymethylaminomethyl (cmnm) group at the wobble position (U34) of certain tRNAs, forming tRNA-cmnm(5)s(2)U34. This Roseiflexus castenholzii (strain DSM 13941 / HLO8) protein is tRNA modification GTPase MnmE.